A 361-amino-acid polypeptide reads, in one-letter code: UDP-N-acetylglucosamine--N-acetylmuramyl-(pentapeptide) pyrophosphoryl-undecaprenol N-acetylglucosamine transferase (361 aa).

UDP-N-acetyl-alpha-D-glucosamine is bound by residues Thr12–Gly14, Asn126, Arg167, Ser192, Ile247, and Gln292.

This sequence belongs to the glycosyltransferase 28 family. MurG subfamily.

It is found in the cell inner membrane. The catalysed reaction is di-trans,octa-cis-undecaprenyl diphospho-N-acetyl-alpha-D-muramoyl-L-alanyl-D-glutamyl-meso-2,6-diaminopimeloyl-D-alanyl-D-alanine + UDP-N-acetyl-alpha-D-glucosamine = di-trans,octa-cis-undecaprenyl diphospho-[N-acetyl-alpha-D-glucosaminyl-(1-&gt;4)]-N-acetyl-alpha-D-muramoyl-L-alanyl-D-glutamyl-meso-2,6-diaminopimeloyl-D-alanyl-D-alanine + UDP + H(+). It functions in the pathway cell wall biogenesis; peptidoglycan biosynthesis. Its function is as follows. Cell wall formation. Catalyzes the transfer of a GlcNAc subunit on undecaprenyl-pyrophosphoryl-MurNAc-pentapeptide (lipid intermediate I) to form undecaprenyl-pyrophosphoryl-MurNAc-(pentapeptide)GlcNAc (lipid intermediate II). The chain is UDP-N-acetylglucosamine--N-acetylmuramyl-(pentapeptide) pyrophosphoryl-undecaprenol N-acetylglucosamine transferase from Syntrophus aciditrophicus (strain SB).